A 434-amino-acid chain; its full sequence is ATP-dependent protease ATPase subunit HslU (434 aa).

Residues isoleucine 18, 60 to 65, aspartate 247, glutamate 312, and arginine 384 each bind ATP; that span reads GVGKTE.

This sequence belongs to the ClpX chaperone family. HslU subfamily. A double ring-shaped homohexamer of HslV is capped on each side by a ring-shaped HslU homohexamer. The assembly of the HslU/HslV complex is dependent on binding of ATP.

Its subcellular location is the cytoplasm. Functionally, ATPase subunit of a proteasome-like degradation complex; this subunit has chaperone activity. The binding of ATP and its subsequent hydrolysis by HslU are essential for unfolding of protein substrates subsequently hydrolyzed by HslV. HslU recognizes the N-terminal part of its protein substrates and unfolds these before they are guided to HslV for hydrolysis. The protein is ATP-dependent protease ATPase subunit HslU of Brucella melitensis biotype 2 (strain ATCC 23457).